The primary structure comprises 197 residues: Small ribosomal subunit protein uS4 (197 aa).

Positions 94-158 (RRLDNVIYRF…LKKYLYDYKN (65 aa)) constitute an S4 RNA-binding domain.

It belongs to the universal ribosomal protein uS4 family. Part of the 30S ribosomal subunit. Contacts protein S5. The interaction surface between S4 and S5 is involved in control of translational fidelity.

Its function is as follows. One of the primary rRNA binding proteins, it binds directly to 16S rRNA where it nucleates assembly of the body of the 30S subunit. In terms of biological role, with S5 and S12 plays an important role in translational accuracy. The chain is Small ribosomal subunit protein uS4 (rpsD) from Carsonella ruddii (strain PV).